The primary structure comprises 115 residues: Macrophage migration inhibitory factor (115 aa).

Pro2 functions as the Proton acceptor; via imino nitrogen in the catalytic mechanism. Substrate contacts are provided by Lys33 and Ile65. Lys78 carries the post-translational modification N6-acetyllysine; alternate. The residue at position 78 (Lys78) is an N6-succinyllysine; alternate. Asn98 provides a ligand contact to substrate.

It belongs to the MIF family. Homotrimer. Interacts with CXCR2 extracellular domain. Interacts with the CD74 extracellular domain, USO1, COPS5 and BNIPL.

The protein localises to the secreted. It is found in the cytoplasm. The enzyme catalyses 3-phenylpyruvate = enol-phenylpyruvate. The catalysed reaction is L-dopachrome = 5,6-dihydroxyindole-2-carboxylate. In terms of biological role, pro-inflammatory cytokine involved in the innate immune response to bacterial pathogens. The expression of MIF at sites of inflammation suggests a role as mediator in regulating the function of macrophages in host defense. Counteracts the anti-inflammatory activity of glucocorticoids. Has phenylpyruvate tautomerase and dopachrome tautomerase activity (in vitro), but the physiological substrate is not known. It is not clear whether the tautomerase activity has any physiological relevance, and whether it is important for cytokine activity. The chain is Macrophage migration inhibitory factor from Homo sapiens (Human).